A 707-amino-acid polypeptide reads, in one-letter code: D-(-)-3-hydroxybutyrate oligomer hydrolase (707 aa).

The first 24 residues, 1–24, serve as a signal peptide directing secretion; sequence MHHDNFRRLGNAAFAAAAALLAVA. The active-site Charge relay system is Ser-311.

This sequence belongs to the D-(-)-3-hydroxybutyrate oligomer hydrolase family.

The protein localises to the secreted. The catalysed reaction is (3R)-hydroxybutanoate dimer + H2O = 2 (R)-3-hydroxybutanoate + H(+). It participates in lipid metabolism; butanoate metabolism. Its function is as follows. Participates in the degradation of poly-3-hydroxybutyrate (PHB). It works downstream of poly(3-hydroxybutyrate) depolymerase, hydrolyzing D(-)-3-hydroxybutyrate oligomers of various length (3HB-oligomers) into 3HB-monomers. This Cupriavidus pinatubonensis (strain JMP 134 / LMG 1197) (Cupriavidus necator (strain JMP 134)) protein is D-(-)-3-hydroxybutyrate oligomer hydrolase.